The following is a 266-amino-acid chain: MAEISATAYAVQVDDLTLAYRQKPVLWDVDVRIPEGVIEAIIGPNGAGKSTLLKAIMGLLPLASGEVRVFGRPFSKERRRVAYVPQRSAVDWDFPTTVFDVVLMGSYGSLGWILRPGKREKARAREAIEEVGMGAFLDRQISELSGGQQQRVFLARALVQDADLYFMDEPFQGVDAATEQAIVTLLKTLKGRGKTLLVVHHDLQTVAEYFDRVLLLNVRVIAEGAVVSAFTEEYVQRAYGGRISSTLFPRGNKEDVHDARAHASVL.

Residues 11–243 enclose the ABC transporter domain; sequence VQVDDLTLAY…YVQRAYGGRI (233 aa). 43-50 contributes to the ATP binding site; the sequence is GPNGAGKS.

The protein belongs to the ABC transporter superfamily.

Its function is as follows. Part of an ATP-driven transport system TroABCD for zinc. The polypeptide is Zinc transport system ATP-binding protein TroB (troB) (Treponema pallidum (strain Nichols)).